The chain runs to 356 residues: 3-dehydroquinate synthase (356 aa).

NAD(+)-binding positions include 106–110 (GVVGD), 130–131 (TT), lysine 143, and lysine 152. 3 residues coordinate Zn(2+): glutamate 185, histidine 248, and histidine 265.

The protein belongs to the sugar phosphate cyclases superfamily. Dehydroquinate synthase family. Co(2+) serves as cofactor. The cofactor is Zn(2+). It depends on NAD(+) as a cofactor.

It is found in the cytoplasm. The catalysed reaction is 7-phospho-2-dehydro-3-deoxy-D-arabino-heptonate = 3-dehydroquinate + phosphate. It participates in metabolic intermediate biosynthesis; chorismate biosynthesis; chorismate from D-erythrose 4-phosphate and phosphoenolpyruvate: step 2/7. Its function is as follows. Catalyzes the conversion of 3-deoxy-D-arabino-heptulosonate 7-phosphate (DAHP) to dehydroquinate (DHQ). The protein is 3-dehydroquinate synthase of Thermoanaerobacter pseudethanolicus (strain ATCC 33223 / 39E) (Clostridium thermohydrosulfuricum).